Consider the following 387-residue polypeptide: Protein disulfide isomerase pTAC5, chloroplastic (387 aa).

Residues 1–40 (MASSSLPLSLPFPLRSLTSTTRSLPFQCSPLFFSIPSSIV) constitute a chloroplast transit peptide. 2 coiled-coil regions span residues 72-106 (EQRWIRERESLLQEISDLQLRIQSLESRNSQLGNS) and 143-163 (REQIVEEVEEEEKRVIIAEEK). A CR-type zinc finger spans residues 318-387 (PVDRSESTNT…CDVCDGKKNL (70 aa)).

In terms of assembly, interacts with HSP21; the formed complex associates with the plastid-encoded RNA polymerase (PEP) complex not only during transcription initiation, but also during elongation and termination, and with a stronger efficiency in illuminated chloroplasts. Binds to promoter regions of PEP-dependent genes, especially after a heat stress. Interacts with FLN2.

It is found in the plastid. The protein localises to the chloroplast stroma. Its subcellular location is the chloroplast nucleoid. The catalysed reaction is Catalyzes the rearrangement of -S-S- bonds in proteins.. Its function is as follows. Exhibits zinc-dependent disulfide isomerase activity. Required for seedling and chloroplast development under heat stress, probably by maintaining plastid-encoded RNA polymerase (PEP)-dependent transcription. The sequence is that of Protein disulfide isomerase pTAC5, chloroplastic from Arabidopsis thaliana (Mouse-ear cress).